The primary structure comprises 112 residues: Putative pterin-4-alpha-carbinolamine dehydratase (112 aa).

It belongs to the pterin-4-alpha-carbinolamine dehydratase family.

It catalyses the reaction (4aS,6R)-4a-hydroxy-L-erythro-5,6,7,8-tetrahydrobiopterin = (6R)-L-erythro-6,7-dihydrobiopterin + H2O. The chain is Putative pterin-4-alpha-carbinolamine dehydratase from Shewanella baltica (strain OS155 / ATCC BAA-1091).